Consider the following 508-residue polypeptide: Protein phosphatase PP2A regulatory subunit B (508 aa).

6 WD repeats span residues 19 to 58, 81 to 122, 166 to 204, 215 to 255, 274 to 312, and 329 to 370; these read TEAD…KKQS, EIEE…IKLV, AHAY…QSFN, ELTE…LCDS, EITS…KPIK, and ENDA…GNDD. The interval 369-466 is disordered; that stretch reads DDKPKFKSAF…MRRRMTSGVG (98 aa). A compositionally biased stretch (acidic residues) spans 396 to 418; that stretch reads DDDDDDDDDDDDEEADDEFDEEV. Basic residues predominate over residues 447 to 461; sequence FKSKKSGQHPMRRRM. The stretch at 477–507 is one WD 7 repeat; that stretch reads DFKKSILHLSWHPRENSVAIAATNNLYIFST.

It belongs to the phosphatase 2A regulatory subunit B family. PP2A exists in several trimeric forms, all of which consist of a core composed of a catalytic subunit associated with a 65 kDa (PR65) (Subunit A) and a 55 kDa (PR55) (Subunit B) regulatory subunit.

In terms of biological role, phosphatase 2A affects a variety of biological processes in the cell such as transcription, cell cycle progression and cellular morphogenesis, and provides an initial identification of critical substrates for this phosphatase. The regulatory subunit may direct the catalytic subunit to distinct, albeit overlapping, subsets of substrates. The chain is Protein phosphatase PP2A regulatory subunit B (CDC55) from Candida tropicalis (Yeast).